We begin with the raw amino-acid sequence, 896 residues long: Protein bride of sevenless (896 aa).

The N-terminal stretch at 1-31 is a signal peptide; that stretch reads MKVMDALQSGRRKPLPVALLCILVTVFCVLE. Residues 32-530 lie on the Extracellular side of the membrane; that stretch reads CHGADLTSPT…MFWRIKMDTW (499 aa). Positions 38 to 84 are disordered; the sequence is TSPTKKSAPLRITKPQPTSQQAKPISITTRAPTTVASTTDDEVSSSV. The span at 52-64 shows a compositional bias: polar residues; sequence PQPTSQQAKPISI. Residues 65 to 84 show a composition bias toward low complexity; it reads TTRAPTTVASTTDDEVSSSV. 4 N-linked (GlcNAc...) asparagine glycosylation sites follow: Asn-183, Asn-307, Asn-474, and Asn-485. Transmembrane regions (helical) follow at residues 531–554, 570–588, 615–637, 655–676, 693–712, 728–748, and 759–781; these read VATG…FIVV, ILLL…PYSI, VFIM…VMLA, AVIC…LVVM, WLWG…GALI, IVIG…LSLF, and LGLQ…FLIV. Topologically, residues 782–896 are cytoplasmic; it reads RGIERSDIAQ…SPDHNKITRF (115 aa). Disordered regions lie at residues 825-844 and 861-896; these read SQDE…PLRG and ANIN…ITRF. The span at 874 to 884 shows a compositional bias: low complexity; that stretch reads QSPSRSSVSSL.

This sequence belongs to the G-protein coupled receptor 3 family. As to expression, expressed exclusively by R8 photoreceptor cells and is internalized in a sev-dependent manner by R7 cells.

It localises to the cell membrane. In terms of biological role, acts as a ligand for sevenless tyrosine-kinase receptor during eye development. The chain is Protein bride of sevenless (boss) from Drosophila melanogaster (Fruit fly).